A 59-amino-acid polypeptide reads, in one-letter code: Putative conotoxin (59 aa).

A signal peptide spans 1–25; sequence MGMRMMFTVFLLVVLATTVVPITLA. Residues 26–47 constitute a propeptide that is removed on maturation; that stretch reads SATDGRNAAANARVSPVISKSS.

This sequence belongs to the conotoxin A superfamily. As to expression, expressed by the venom duct.

Its subcellular location is the secreted. In terms of biological role, acts as a neurotoxin. In Conus imperialis (Imperial cone), this protein is Putative conotoxin.